Here is a 325-residue protein sequence, read N- to C-terminus: uncharacterized protein (325 aa).

The protein belongs to the mgp1/MG371 family.

This is an uncharacterized protein from Mycoplasma pneumoniae (strain ATCC 29342 / M129 / Subtype 1) (Mycoplasmoides pneumoniae).